We begin with the raw amino-acid sequence, 196 residues long: Putative archaetidylserine decarboxylase proenzyme (196 aa).

Serine 164 (schiff-base intermediate with substrate; via pyruvic acid) is an active-site residue. Residue serine 164 is modified to Pyruvic acid (Ser); by autocatalysis.

This sequence belongs to the phosphatidylserine decarboxylase family. PSD-A subfamily. Heterodimer of a large membrane-associated beta subunit and a small pyruvoyl-containing alpha subunit. Pyruvate is required as a cofactor. In terms of processing, is synthesized initially as an inactive proenzyme. Formation of the active enzyme involves a self-maturation process in which the active site pyruvoyl group is generated from an internal serine residue via an autocatalytic post-translational modification. Two non-identical subunits are generated from the proenzyme in this reaction, and the pyruvate is formed at the N-terminus of the alpha chain, which is derived from the carboxyl end of the proenzyme. The post-translation cleavage follows an unusual pathway, termed non-hydrolytic serinolysis, in which the side chain hydroxyl group of the serine supplies its oxygen atom to form the C-terminus of the beta chain, while the remainder of the serine residue undergoes an oxidative deamination to produce ammonia and the pyruvoyl prosthetic group on the alpha chain.

The protein localises to the cell membrane. It catalyses the reaction archaetidylserine + H(+) = archaetidylethanolamine + CO2. In terms of biological role, catalyzes the formation of archaetidylethanolamine (PtdEtn) from archaetidylserine (PtdSer). In Halobacterium salinarum (strain ATCC 700922 / JCM 11081 / NRC-1) (Halobacterium halobium), this protein is Putative archaetidylserine decarboxylase proenzyme.